A 321-amino-acid chain; its full sequence is Ribosomal RNA small subunit methyltransferase H (321 aa).

S-adenosyl-L-methionine is bound by residues 43–45 (GGH), Asp63, Phe89, Asp110, and Gln117. The segment at 286–321 (HPAGKALRAGPRETRDNPRSRSAVLRVAERSERHAA) is disordered. Basic and acidic residues-rich tracts occupy residues 295-304 (GPRETRDNPR) and 312-321 (VAERSERHAA).

The protein belongs to the methyltransferase superfamily. RsmH family.

The protein resides in the cytoplasm. It catalyses the reaction cytidine(1402) in 16S rRNA + S-adenosyl-L-methionine = N(4)-methylcytidine(1402) in 16S rRNA + S-adenosyl-L-homocysteine + H(+). Specifically methylates the N4 position of cytidine in position 1402 (C1402) of 16S rRNA. The polypeptide is Ribosomal RNA small subunit methyltransferase H (Acidithiobacillus ferrooxidans (strain ATCC 23270 / DSM 14882 / CIP 104768 / NCIMB 8455) (Ferrobacillus ferrooxidans (strain ATCC 23270))).